A 343-amino-acid polypeptide reads, in one-letter code: Homeobox protein Hox-D13 (343 aa).

Disordered regions lie at residues 1 to 28 (MSRAGSWDMDGLRADGGGAGGAPASSSS) and 78 to 115 (GTSERTGSSSSSSSSAVVAARPEAPPAKECPAPTPAAA). Residues 85 to 115 (SSSSSSSSAVVAARPEAPPAKECPAPTPAAA) are compositionally biased toward low complexity. The homeobox DNA-binding region spans 276–335 (GRKKRVPYTKLQLKELENEYAINKFINKDKRRRISAATNLSERQVTIWFQNRRVKDKKIV).

This sequence belongs to the Abd-B homeobox family.

Its subcellular location is the nucleus. Functionally, sequence-specific transcription factor that binds gene promoters and activates their transcription. Part of a developmental regulatory system that provides cells with specific positional identities on the anterior-posterior axis. The polypeptide is Homeobox protein Hox-D13 (HOXD13) (Homo sapiens (Human)).